Consider the following 654-residue polypeptide: Acetyl-coenzyme A synthetase (654 aa).

CoA contacts are provided by residues 196-199 and Thr316; that span reads RGGK. Residues 392–394, 416–421, Asp507, and Arg522 each bind ATP; these read GEP and DTWWQT. CoA is bound at residue Ser530. Position 533 (Arg533) interacts with ATP. Val544 and Val549 together coordinate Mg(2+). Position 619 is an N6-acetyllysine (Lys619).

It belongs to the ATP-dependent AMP-binding enzyme family. Mg(2+) is required as a cofactor. Acetylated. Deacetylation by the SIR2-homolog deacetylase activates the enzyme.

The enzyme catalyses acetate + ATP + CoA = acetyl-CoA + AMP + diphosphate. In terms of biological role, catalyzes the conversion of acetate into acetyl-CoA (AcCoA), an essential intermediate at the junction of anabolic and catabolic pathways. AcsA undergoes a two-step reaction. In the first half reaction, AcsA combines acetate with ATP to form acetyl-adenylate (AcAMP) intermediate. In the second half reaction, it can then transfer the acetyl group from AcAMP to the sulfhydryl group of CoA, forming the product AcCoA. The protein is Acetyl-coenzyme A synthetase of Chromobacterium violaceum (strain ATCC 12472 / DSM 30191 / JCM 1249 / CCUG 213 / NBRC 12614 / NCIMB 9131 / NCTC 9757 / MK).